The primary structure comprises 456 residues: ATP-dependent protease ATPase subunit HslU (456 aa).

Residues isoleucine 18, 60–65, aspartate 270, glutamate 334, and arginine 406 each bind ATP; that span reads GVGKTE.

Belongs to the ClpX chaperone family. HslU subfamily. As to quaternary structure, a double ring-shaped homohexamer of HslV is capped on each side by a ring-shaped HslU homohexamer. The assembly of the HslU/HslV complex is dependent on binding of ATP.

It is found in the cytoplasm. ATPase subunit of a proteasome-like degradation complex; this subunit has chaperone activity. The binding of ATP and its subsequent hydrolysis by HslU are essential for unfolding of protein substrates subsequently hydrolyzed by HslV. HslU recognizes the N-terminal part of its protein substrates and unfolds these before they are guided to HslV for hydrolysis. The polypeptide is ATP-dependent protease ATPase subunit HslU (Exiguobacterium sibiricum (strain DSM 17290 / CCUG 55495 / CIP 109462 / JCM 13490 / 255-15)).